The sequence spans 642 residues: Threonine--tRNA ligase (642 aa).

In terms of domain architecture, TGS spans 1-61 (MPVITLPDGS…ENDATLAIIT (61 aa)). Residues 243–534 (DHRKIGKQLD…LTEEFAGFFP (292 aa)) are catalytic. Residues Cys334, His385, and His511 each coordinate Zn(2+).

This sequence belongs to the class-II aminoacyl-tRNA synthetase family. In terms of assembly, homodimer. The cofactor is Zn(2+).

The protein localises to the cytoplasm. The enzyme catalyses tRNA(Thr) + L-threonine + ATP = L-threonyl-tRNA(Thr) + AMP + diphosphate + H(+). Catalyzes the attachment of threonine to tRNA(Thr) in a two-step reaction: L-threonine is first activated by ATP to form Thr-AMP and then transferred to the acceptor end of tRNA(Thr). Also edits incorrectly charged L-seryl-tRNA(Thr). The sequence is that of Threonine--tRNA ligase from Salmonella paratyphi C (strain RKS4594).